The following is a 497-amino-acid chain: Arginine/ornithine antiporter ArcD2 (497 aa).

13 consecutive transmembrane segments (helical) span residues 8–28 (GISL…GGVF), 41–61 (GGVV…VLSF), 88–108 (FLSG…FAVL), 127–147 (SLTI…MLLV), 160–180 (IVMI…IILF), 220–240 (IKGS…ATMM), 255–275 (VIGL…PYGY), 297–317 (VGGW…LGAW), 354–374 (LLIT…VANA), 378–398 (FIYM…AYLF), 406–426 (SVKN…ALYL), 429–449 (WQYV…FIGA), and 462–482 (WLGM…LICG).

This sequence belongs to the amino acid-polyamine-organocation (APC) superfamily. Basic amino acid/polyamine antiporter (APA) (TC 2.A.3.2) family.

It localises to the cell membrane. It catalyses the reaction L-ornithine(in) + L-arginine(out) = L-ornithine(out) + L-arginine(in). Catalyzes electroneutral exchange between L-arginine and L-ornithine. Can also efficiently translocate L-alanine. May function in vivo as a L-arginine/L-alanine exchanger in a pathway together with the arcT gene, which is found adjacent to the arcD2 gene in the ADI gene cluster. The sequence is that of Arginine/ornithine antiporter ArcD2 from Lactococcus lactis subsp. cremoris (strain MG1363).